The primary structure comprises 599 residues: Aspartate--tRNA ligase (599 aa).

E180 is an L-aspartate binding site. Residues 204 to 207 (QIFK) form an aspartate region. R226 serves as a coordination point for L-aspartate. Residues 226-228 (RDE) and Q235 each bind ATP. H454 is a binding site for L-aspartate. E488 is a binding site for ATP. R495 serves as a coordination point for L-aspartate. An ATP-binding site is contributed by 540–543 (GLDR).

Belongs to the class-II aminoacyl-tRNA synthetase family. Type 1 subfamily. As to quaternary structure, homodimer.

It is found in the cytoplasm. It carries out the reaction tRNA(Asp) + L-aspartate + ATP = L-aspartyl-tRNA(Asp) + AMP + diphosphate. Functionally, catalyzes the attachment of L-aspartate to tRNA(Asp) in a two-step reaction: L-aspartate is first activated by ATP to form Asp-AMP and then transferred to the acceptor end of tRNA(Asp). This is Aspartate--tRNA ligase from Clostridium botulinum (strain Eklund 17B / Type B).